Reading from the N-terminus, the 133-residue chain is Phosphoribosyl-AMP cyclohydrolase (133 aa).

Mg(2+) is bound at residue Asp-82. Zn(2+) is bound at residue Cys-83. Mg(2+)-binding residues include Asp-84 and Asp-86. Residues Cys-100 and Cys-107 each coordinate Zn(2+).

Belongs to the PRA-CH family. In terms of assembly, homodimer. Mg(2+) is required as a cofactor. Requires Zn(2+) as cofactor.

The protein resides in the cytoplasm. The enzyme catalyses 1-(5-phospho-beta-D-ribosyl)-5'-AMP + H2O = 1-(5-phospho-beta-D-ribosyl)-5-[(5-phospho-beta-D-ribosylamino)methylideneamino]imidazole-4-carboxamide. The protein operates within amino-acid biosynthesis; L-histidine biosynthesis; L-histidine from 5-phospho-alpha-D-ribose 1-diphosphate: step 3/9. In terms of biological role, catalyzes the hydrolysis of the adenine ring of phosphoribosyl-AMP. This Aromatoleum aromaticum (strain DSM 19018 / LMG 30748 / EbN1) (Azoarcus sp. (strain EbN1)) protein is Phosphoribosyl-AMP cyclohydrolase.